The chain runs to 94 residues: Small ribosomal subunit protein bS20c (94 aa).

Belongs to the bacterial ribosomal protein bS20 family.

It localises to the plastid. The protein localises to the chloroplast. Binds directly to 16S ribosomal RNA. The protein is Small ribosomal subunit protein bS20c of Porphyra purpurea (Red seaweed).